The following is a 509-amino-acid chain: tRNA-2-methylthio-N(6)-dimethylallyladenosine synthase (509 aa).

Polar residues predominate over residues 1-15; that stretch reads MNEQQRLASRQANSS. The segment at 1-25 is disordered; it reads MNEQQRLASRQANSSTKKEEKDYSK. Residues 16–25 show a composition bias toward basic and acidic residues; the sequence is TKKEEKDYSK. The MTTase N-terminal domain maps to 66 to 184; that stretch reads RKFYIRTYGC…LPYILKDAMF (119 aa). Residues C75, C111, C145, C221, C225, and C228 each coordinate [4Fe-4S] cluster. The region spanning 207 to 437 is the Radical SAM core domain; it reads RRGDIKAWVN…NTLVNEYGVN (231 aa). In terms of domain architecture, TRAM spans 440–503; sequence KRYIGQIVEV…TWSLNGELVK (64 aa).

This sequence belongs to the methylthiotransferase family. MiaB subfamily. Monomer. Requires [4Fe-4S] cluster as cofactor.

The protein localises to the cytoplasm. The enzyme catalyses N(6)-dimethylallyladenosine(37) in tRNA + (sulfur carrier)-SH + AH2 + 2 S-adenosyl-L-methionine = 2-methylsulfanyl-N(6)-dimethylallyladenosine(37) in tRNA + (sulfur carrier)-H + 5'-deoxyadenosine + L-methionine + A + S-adenosyl-L-homocysteine + 2 H(+). Functionally, catalyzes the methylthiolation of N6-(dimethylallyl)adenosine (i(6)A), leading to the formation of 2-methylthio-N6-(dimethylallyl)adenosine (ms(2)i(6)A) at position 37 in tRNAs that read codons beginning with uridine. The polypeptide is tRNA-2-methylthio-N(6)-dimethylallyladenosine synthase (Bacillus mycoides (strain KBAB4) (Bacillus weihenstephanensis)).